A 176-amino-acid chain; its full sequence is Co-chaperone protein HscB (176 aa).

Residues aspartate 2–leucine 74 form the J domain.

The protein belongs to the HscB family. In terms of assembly, interacts with HscA and stimulates its ATPase activity. Interacts with IscU.

Its function is as follows. Co-chaperone involved in the maturation of iron-sulfur cluster-containing proteins. Seems to help targeting proteins to be folded toward HscA. This chain is Co-chaperone protein HscB, found in Escherichia coli O7:K1 (strain IAI39 / ExPEC).